The sequence spans 802 residues: Copal-8-ol diphosphate hydratase, chloroplastic (802 aa).

The transit peptide at 1–24 (MQVIITSSHRFFCHHLHQLKSPTS) directs the protein to the chloroplast. Substrate is bound at residue Lys-249. Residues Asp-382 and Asp-384 each contribute to the Mg(2+) site. The DXDD motif signature appears at 382–385 (DVDD). Position 468 (Lys-468) interacts with substrate.

This sequence belongs to the terpene synthase family. Requires Mg(2+) as cofactor. As to expression, expressed specifically in the secretory cells of the glandular trichomes.

It is found in the plastid. The protein localises to the chloroplast. It catalyses the reaction (2E,6E,10E)-geranylgeranyl diphosphate + H2O = 8-hydroxycopalyl diphosphate. It participates in secondary metabolite biosynthesis; terpenoid biosynthesis. Class-II terpene synthase that synthesizes 8-hydroxy-copalyl diphosphate. Involved in the biosynthesis of cis-abienol, a labdane diterpene that can be used as synthesis precursor of ambergris substitution fragance products. This chain is Copal-8-ol diphosphate hydratase, chloroplastic, found in Nicotiana tabacum (Common tobacco).